The following is a 129-amino-acid chain: UPF0325 protein PC1_0937 (129 aa).

The protein belongs to the UPF0325 family.

This chain is UPF0325 protein PC1_0937, found in Pectobacterium carotovorum subsp. carotovorum (strain PC1).